Here is a 323-residue protein sequence, read N- to C-terminus: Serine acetyltransferase 2 (323 aa).

A disordered region spans residues 302 to 323; the sequence is AQSNGPSLSAGDTEKGHTNSTS. The span at 313-323 shows a compositional bias: basic and acidic residues; it reads DTEKGHTNSTS.

This sequence belongs to the transferase hexapeptide repeat family. In terms of assembly, homomultimer. As to expression, ubiquitously expressed at low levels. Localized in vascular tissues, particularly in phloem.

The protein resides in the cytoplasm. It catalyses the reaction L-serine + acetyl-CoA = O-acetyl-L-serine + CoA. Its pathway is amino-acid biosynthesis; L-cysteine biosynthesis; L-cysteine from L-serine: step 1/2. This Arabidopsis thaliana (Mouse-ear cress) protein is Serine acetyltransferase 2.